The primary structure comprises 395 residues: Sensor protein DltS (395 aa).

2 helical membrane passes run 9 to 29 (FVFL…AVSN) and 136 to 156 (FLIL…SLYL). A Histidine kinase domain is found at 177–387 (DASHELKTPI…RLEVQLPIDG (211 aa)). Histidine 180 carries the post-translational modification Phosphohistidine; by autocatalysis.

The protein localises to the cell membrane. It carries out the reaction ATP + protein L-histidine = ADP + protein N-phospho-L-histidine.. Functionally, member of the two-component regulatory system DltS/DltR. Regulates the expression of the dlt operon. Probably phosphorylates DltR. The sequence is that of Sensor protein DltS (dltS) from Streptococcus agalactiae serotype V (strain ATCC BAA-611 / 2603 V/R).